The primary structure comprises 103 residues: MAVQQKIRIKLKSYDHSLVDKWALRIIDVVKQTDAIIFGPIPLPTKSHVYTVNRSPHVDKKSREQFSFSSHKRLIEIMNPTSRTIDMLMKLELPSGVDVEIKS.

This sequence belongs to the universal ribosomal protein uS10 family. As to quaternary structure, part of the 30S ribosomal subunit.

In terms of biological role, involved in the binding of tRNA to the ribosomes. The sequence is that of Small ribosomal subunit protein uS10 from Chlorobium chlorochromatii (strain CaD3).